The primary structure comprises 275 residues: MASELEYESVLCVKPDVSVYRIPPRASNRGYRASDWKLDQPDWTGRLRITSKGKVAYIKLEDKVSGELFAQAPVEQYPGIAVETVTDSSRYFVIRIQDGTGRSAFIGIGFSDRGDAFDFNVSLQDHFKWVKQESEISKESQEMDSRPKLDLGFKEGQTIKLSIGNITTKKGGTSKPKTAGTGGLSLLPPPPGGKVTIPPPSSSVAISNHVTPPPIPKSNHGGSDADILLDLDSPAPITTPAPAPVSASNDLWGDFSTASSSVPNQAPQPSNWVQF.

The tract at residues 166–190 is disordered; it reads ITTKKGGTSKPKTAGTGGLSLLPPP. A compositionally biased stretch (low complexity) spans 167 to 179; it reads TTKKGGTSKPKTA. T211 bears the Phosphothreonine mark. Residues 215–275 form a disordered region; that stretch reads IPKSNHGGSD…APQPSNWVQF (61 aa). 2 short sequence motifs (WXXF motif) span residues 252-255 and 272-275; these read WGDF and WVQF. Residues 256 to 275 are compositionally biased toward polar residues; it reads STASSSVPNQAPQPSNWVQF.

The protein belongs to the NECAP family. In terms of assembly, interacts with AP1G1 and AP2A1 components of the adapter protein complexes AP-1 and AP-2. Interacts with the GAE domain proteins GGA1, GGA2 and GGA3.

The protein resides in the cytoplasmic vesicle. It localises to the clathrin-coated vesicle membrane. The protein localises to the cell membrane. Its function is as follows. Involved in endocytosis. The sequence is that of Adaptin ear-binding coat-associated protein 1 (NECAP1) from Bos taurus (Bovine).